The following is a 537-amino-acid chain: uncharacterized protein (537 aa).

It belongs to the RuBisCO large chain family. Type IV subfamily.

Functionally, unknown. Probably does not have RuBisCO activity. This is an uncharacterized protein from Symbiodinium sp. (Dinoflagellate).